The primary structure comprises 546 residues: Chaperonin GroEL (546 aa).

ATP-binding positions include 30 to 33, K51, 87 to 91, G415, and D495; these read TLGP and DGTTT.

The protein belongs to the chaperonin (HSP60) family. As to quaternary structure, forms a cylinder of 14 subunits composed of two heptameric rings stacked back-to-back. Interacts with the co-chaperonin GroES.

It is found in the cytoplasm. It catalyses the reaction ATP + H2O + a folded polypeptide = ADP + phosphate + an unfolded polypeptide.. Together with its co-chaperonin GroES, plays an essential role in assisting protein folding. The GroEL-GroES system forms a nano-cage that allows encapsulation of the non-native substrate proteins and provides a physical environment optimized to promote and accelerate protein folding. This Brucella anthropi (strain ATCC 49188 / DSM 6882 / CCUG 24695 / JCM 21032 / LMG 3331 / NBRC 15819 / NCTC 12168 / Alc 37) (Ochrobactrum anthropi) protein is Chaperonin GroEL.